The following is a 219-amino-acid chain: 2-C-methyl-D-erythritol 4-phosphate cytidylyltransferase (219 aa).

The protein belongs to the IspD/TarI cytidylyltransferase family. IspD subfamily.

The catalysed reaction is 2-C-methyl-D-erythritol 4-phosphate + CTP + H(+) = 4-CDP-2-C-methyl-D-erythritol + diphosphate. Its pathway is isoprenoid biosynthesis; isopentenyl diphosphate biosynthesis via DXP pathway; isopentenyl diphosphate from 1-deoxy-D-xylulose 5-phosphate: step 2/6. Catalyzes the formation of 4-diphosphocytidyl-2-C-methyl-D-erythritol from CTP and 2-C-methyl-D-erythritol 4-phosphate (MEP). In Phocaeicola vulgatus (strain ATCC 8482 / DSM 1447 / JCM 5826 / CCUG 4940 / NBRC 14291 / NCTC 11154) (Bacteroides vulgatus), this protein is 2-C-methyl-D-erythritol 4-phosphate cytidylyltransferase.